Consider the following 498-residue polypeptide: Putative phosphotransferase 057R (498 aa).

This is Putative phosphotransferase 057R from Dryophytes versicolor (chameleon treefrog).